The sequence spans 154 residues: Iron-sulfur cluster assembly 2 homolog, mitochondrial (154 aa).

The transit peptide at 1–8 (MAAAWGSS) directs the protein to the mitochondrion. The disordered stretch occupies residues 29–49 (SLGPQARREASSSSPEAGEGQ). Over residues 39 to 49 (SSSSPEAGEGQ) the composition is skewed to low complexity. Residues Cys79, Cys144, and Cys146 each contribute to the Fe cation site.

This sequence belongs to the HesB/IscA family. In terms of assembly, heterotetramer; forms a dimer of dimers with IBA57. Interacts with [2Fe-2S]-ISCA2 forming the heterodimer [2Fe- 2S]-ISCA2-IBA57 complex; [2Fe-2S] cluster binding is absolutely required to promote the complex formation.

It localises to the mitochondrion. In terms of biological role, involved in the maturation of mitochondrial 4Fe-4S proteins functioning late in the iron-sulfur cluster assembly pathway. May be involved in the binding of an intermediate of Fe/S cluster assembly. In Homo sapiens (Human), this protein is Iron-sulfur cluster assembly 2 homolog, mitochondrial (ISCA2).